The primary structure comprises 397 residues: MAKAKFERTKPHVNIGTIGHIDHGKTTLTAAITKVLHDAYPDINEASAFDQIDKAPEERQRGITISIAHVEYQTEARHYAHVDCPGHADYIKNMITGAAQMDGAILVVAATDGPMPQTKEHVLLARQVGVPYIVVALNKADMVDDEEILELVELEVRELLSEYEFPGDDVPVVKVSALKALEGDKEWGNSVLELMKAVDEAIPEPERDVDKPFLMPIEDVFTITGRGTVVTGRIERGVLKVNETVDIIGIKTEKTTTTVTGIEMFRKLLDEGQAGENVGLLLRGIKREDVERGQVIIKPGSVTPHTEFEAQAYILSKDEGGRHTPFFNNYRPQFYFRTTDVTGVVTLPEGTEMVMPGDNTEMKVELIQPVAMEEGLKFAIREGGRTVGAGQVTKINK.

Residues 10 to 206 (KPHVNIGTIG…AVDEAIPEPE (197 aa)) enclose the tr-type G domain. Positions 19–26 (GHIDHGKT) are G1. 19–26 (GHIDHGKT) is a GTP binding site. T26 lines the Mg(2+) pocket. A G2 region spans residues 62–66 (GITIS). Positions 83–86 (DCPG) are G3. Residues 83 to 87 (DCPGH) and 138 to 141 (NKAD) each bind GTP. The interval 138-141 (NKAD) is G4. Positions 176–178 (SAL) are G5.

It belongs to the TRAFAC class translation factor GTPase superfamily. Classic translation factor GTPase family. EF-Tu/EF-1A subfamily. In terms of assembly, monomer.

It is found in the cytoplasm. The catalysed reaction is GTP + H2O = GDP + phosphate + H(+). GTP hydrolase that promotes the GTP-dependent binding of aminoacyl-tRNA to the A-site of ribosomes during protein biosynthesis. In Streptomyces coelicolor (strain ATCC BAA-471 / A3(2) / M145), this protein is Elongation factor Tu-1.